The following is a 635-amino-acid chain: Threonine--tRNA ligase (635 aa).

Residues 1 to 61 form the TGS domain; the sequence is MIAITLPDGS…DRDVALAIIT (61 aa). Residues 242 to 533 form a catalytic region; it reads DHRKLGKSLD…LLENHAGALP (292 aa). The Zn(2+) site is built by Cys-333, His-384, and His-510.

It belongs to the class-II aminoacyl-tRNA synthetase family. Homodimer. The cofactor is Zn(2+).

The protein localises to the cytoplasm. The enzyme catalyses tRNA(Thr) + L-threonine + ATP = L-threonyl-tRNA(Thr) + AMP + diphosphate + H(+). Functionally, catalyzes the attachment of threonine to tRNA(Thr) in a two-step reaction: L-threonine is first activated by ATP to form Thr-AMP and then transferred to the acceptor end of tRNA(Thr). Also edits incorrectly charged L-seryl-tRNA(Thr). This chain is Threonine--tRNA ligase, found in Cupriavidus pinatubonensis (strain JMP 134 / LMG 1197) (Cupriavidus necator (strain JMP 134)).